We begin with the raw amino-acid sequence, 980 residues long: Glutamate receptor ionotropic, kainate 5 (980 aa).

The signal sequence occupies residues 1–14 (MPAELLLLLIVAFA). Over 15-544 (SPSCQVLSSL…YFSFLDPFSP (530 aa)) the chain is Extracellular. 3 disulfides stabilise this stretch: cysteine 36–cysteine 292, cysteine 83–cysteine 334, and cysteine 165–cysteine 170. N-linked (GlcNAc...) asparagine glycans are attached at residues asparagine 219, asparagine 271, asparagine 285, asparagine 322, asparagine 372, asparagine 394, asparagine 400, asparagine 407, asparagine 414, and asparagine 478. A helical membrane pass occupies residues 545 to 565 (AVWLFMLLAYLAVSCVLFLAA). Topologically, residues 566–622 (RLSPYEWYNPHPCLRARPHILENQYTLGNSLWFPVGGFMQQGSEIMPRALSTRCVSG) are cytoplasmic. Residues 623–643 (VWWAFTLIIISSYTANLAAFL) traverse the membrane as a helical segment. At 644-803 (TVQRMEVPVE…HRAKGLGMEN (160 aa)) the chain is on the extracellular side. An N-linked (GlcNAc...) asparagine glycan is attached at asparagine 735. Residues 804 to 824 (IGGIFIVLICGLIIAVFVAVM) traverse the membrane as a helical segment. Topologically, residues 825–980 (EFIWSTRRSA…AGPRELAEHE (156 aa)) are cytoplasmic. 2 disordered regions span residues 891–927 (YSAGAGGDAGSAHGGPQRLLDDPGPPSGARPAAPTPC) and 944–980 (ASGAGAPPRGLGVPAEATSPPRPRPGPAGPRELAEHE). The segment covering 894–903 (GAGGDAGSAH) has biased composition (gly residues).

The protein belongs to the glutamate-gated ion channel (TC 1.A.10.1) family. GRIK5 subfamily. As to quaternary structure, homotetramer. Heterotetramer with GRIK2. Can form functional heteromeric receptors with GRIK1 and GRIK2. Can form functional heteromeric receptors with GRIK3.

Its subcellular location is the cell membrane. The protein resides in the postsynaptic cell membrane. It is found in the presynaptic cell membrane. Functionally, ionotropic glutamate receptor that functions as a cation-permeable ligand-gated ion channel, gated by L-glutamate and the glutamatergic agonist kainic acid. Cannot form functional channels on its own and produces channel activity only in heteromeric assembly with GRIK1 and GRIK2 subunits. Can form functional heteromeric receptors with GRIK3. This is Glutamate receptor ionotropic, kainate 5 (GRIK5) from Homo sapiens (Human).